The primary structure comprises 883 residues: Lysine-specific demethylase JMJ29 (883 aa).

Disordered regions lie at residues 30-62 (KPFMSKGSSPSSSSDSRKRKLSRAEDSDDSAVK) and 161-204 (RTHS…SRKQ). The segment covering 34–43 (SKGSSPSSSS) has biased composition (low complexity). 2 stretches are compositionally biased toward polar residues: residues 161-172 (RTHSLSANSPEN) and 184-204 (SPASNVSDSIQKNDCTSSRKQ). Residues Cys209, Cys212, Cys223, Cys226, Cys232, Cys235, Cys252, Cys255, Cys338, Cys341, Cys363, and His381 each contribute to the Zn(2+) site. An RING-type; degenerate zinc finger spans residues 209–256 (CHQCLKGERITLLICSECEKTMFCLQCIRKWYPNLSEDDVVEKCPLCR). Residues 333 to 392 (DERVYCDHCATSIVDLHRSCPKCSYELCLKCCQEIREGSLSERPEMKFHYVDRGHRYMHG) form a B box-type; atypical zinc finger. The JmjC domain maps to 632 to 863 (PRTGILNIAT…ECLRLTEEFR (232 aa)). Fe cation is bound by residues His676 and Asp678. The segment at 713–743 (NKVDKQSTEDCNEKEEEEEEELNMPEISSNE) is disordered. Acidic residues predominate over residues 722-735 (DCNEKEEEEEEELN). Residues 755-762 (FRREDVPK) carry the Nuclear localization signal motif. His831 is a binding site for Fe cation.

Belongs to the JARID1 histone demethylase family. The cofactor is Fe(2+). In terms of tissue distribution, expressed in inflorescences, roots, siliques, leaves and stems.

Its subcellular location is the nucleus. In terms of biological role, may function as histone H3 lysine demethylase and be involved in regulation of gene expression. The sequence is that of Lysine-specific demethylase JMJ29 from Arabidopsis thaliana (Mouse-ear cress).